The chain runs to 373 residues: CASP-like protein UU6 (373 aa).

Disordered regions lie at residues 1 to 100 and 172 to 195; these read MGTL…GSEG and TKETETTPESSRASDEDAPTPKKK. Residues 1–204 lie on the Cytoplasmic side of the membrane; it reads MGTLTDPTVD…KHRLRKHLTA (204 aa). The span at 56-74 shows a compositional bias: polar residues; it reads KTNTGNAAESTASTENGET. The chain crosses the membrane as a helical span at residues 205–225; it reads IGAYSFAFRFSETVLSLIAIV. Residues 226-253 lie on the Extracellular side of the membrane; sequence VMCSTRGSMRTDGVDFGTLKFNHFQAYR. The helical transmembrane segment at 254-274 threads the bilayer; it reads YLVAVNVIVFVYSTFQFIQLL. Over 275–276 the chain is Cytoplasmic; it reads YT. The helical transmembrane segment at 277–297 threads the bilayer; it reads VILGISFIPSIFISTWMTFGF. Residues 298-342 lie on the Extracellular side of the membrane; sequence DQLFLYLLLSASTSAATVANMSYTGEMGIQLCSRFDVGSFCSKAD. N-linked (GlcNAc...) asparagine glycosylation is present at N317. The helical transmembrane segment at 343–363 threads the bilayer; that stretch reads VAVTMSFFAVLAMLSSTILAI. Residues 364–373 are Cytoplasmic-facing; that stretch reads YRIAVLLREY.

The protein belongs to the Casparian strip membrane proteins (CASP) family. In terms of assembly, homodimer and heterodimers.

It is found in the cell membrane. The protein is CASP-like protein UU6 of Physcomitrium patens (Spreading-leaved earth moss).